A 1249-amino-acid chain; its full sequence is Clustered mitochondria protein homolog (1249 aa).

Residues 1 to 34 (MAQTNGELEHSKAETPEQLTNGNHPEETQEEEQN) are disordered. One can recognise a Clu domain in the interval 321 to 565 (DITRSQENYL…RVTPLDVMWQ (245 aa)). Disordered stretches follow at residues 610–638 (VETASKEKSEENAESKEEGSEEKSEEALD) and 874–907 (VPATNGASQEEGKKKKKKGGDSKSPARAASPEKP). A compositionally biased stretch (basic and acidic residues) spans 613–638 (ASKEKSEENAESKEEGSEEKSEEALD). TPR repeat units follow at residues 975-1008 (AKLYHQLSMLYYQTDEKEAAVELARKAVIVTERT), 1017-1050 (ILSYLNLSLFEHASGNTKTALVYIKHAMDLWKII), and 1059-1092 (ITTMNNAAVMLQHLKQYSDSRKWFEASLTVCESL). The span at 1178 to 1191 (TRTLGTKVQPQVGQ) shows a compositional bias: polar residues. Residues 1178–1249 (TRTLGTKVQP…KLRGSKKSSA (72 aa)) are disordered. Over residues 1192 to 1205 (SAPSASGASSANPS) the composition is skewed to low complexity.

This sequence belongs to the CLU family. As to quaternary structure, may associate with the eukaryotic translation initiation factor 3 (eIF-3) complex.

It is found in the cytoplasm. In terms of biological role, mRNA-binding protein involved in proper cytoplasmic distribution of mitochondria. The polypeptide is Clustered mitochondria protein homolog (Aspergillus oryzae (strain ATCC 42149 / RIB 40) (Yellow koji mold)).